Reading from the N-terminus, the 262-residue chain is Outer dense fiber protein 1 (262 aa).

Residues serine 5 and serine 10 each carry the phosphoserine modification. Repeat 1 spans residues 34–38 (RCLCD). The tract at residues 34–77 (RCLCDLYMHPYCCCDLHPYPYCLCYSKRSRSCGLCDLYPCCLCD) is 2 X 5 AA repeats of [RC]-C-L-C-D. The residue at position 64 (serine 64) is a Phosphoserine. Residues 73-77 (CCLCD) form repeat 2. Phosphoserine occurs at positions 86, 122, 123, 151, 167, 189, and 194. The segment at 209–250 (CNPCNPCSPCNPCNPCNPCNPCSPCSPCSPCNPCDPCNPCYP) is C-X-P repeat region.

Interacts (via leucine zipper motif) with TCP11. Interacts with SPAG4. Interacts with KLC3. Interacts with CCDC42.

The protein resides in the cell projection. It localises to the cilium. It is found in the flagellum. The protein localises to the cytoplasm. Its subcellular location is the cytoskeleton. The protein resides in the microtubule organizing center. It localises to the centrosome. Functionally, component of the outer dense fibers (ODF) of spermatozoa. ODF are filamentous structures located on the outside of the axoneme in the midpiece and principal piece of the mammalian sperm tail and may help to maintain the passive elastic structures and elastic recoil of the sperm tail. This is Outer dense fiber protein 1 (ODF1) from Sus scrofa (Pig).